A 934-amino-acid chain; its full sequence is UPF0182 protein sync_1321 (934 aa).

Transmembrane regions (helical) follow at residues 2 to 22, 45 to 65, 86 to 106, 129 to 149, 165 to 185, 208 to 228, 251 to 271, 300 to 320, and 327 to 347; these read AKII…IVII, LLLQ…CALW, GYRY…VLAI, FSTG…IMFG, VCIC…FSIP, IAFG…TALW, HGLR…MWLS, LGSI…FSSV, and LILA…FPLM.

It belongs to the UPF0182 family.

Its subcellular location is the cell membrane. This is UPF0182 protein sync_1321 from Synechococcus sp. (strain CC9311).